A 415-amino-acid polypeptide reads, in one-letter code: Histidine--tRNA ligase (415 aa).

The protein belongs to the class-II aminoacyl-tRNA synthetase family. In terms of assembly, homodimer.

The protein localises to the cytoplasm. The enzyme catalyses tRNA(His) + L-histidine + ATP = L-histidyl-tRNA(His) + AMP + diphosphate + H(+). This Clostridium perfringens (strain ATCC 13124 / DSM 756 / JCM 1290 / NCIMB 6125 / NCTC 8237 / Type A) protein is Histidine--tRNA ligase.